A 348-amino-acid polypeptide reads, in one-letter code: Rhodopsin (348 aa).

Over 1–33 the chain is Extracellular; the sequence is TEGPYFYVPMVNTTGIVRSPYEYPQYYLVNPAA. The N-linked (GlcNAc...) asparagine glycan is linked to Asn12. The chain crosses the membrane as a helical span at residues 34–58; it reads FAILGAYMFFLIIVGFPVNFMTLYV. The Cytoplasmic segment spans residues 59–70; the sequence is TLEHKKLRTPLN. A helical membrane pass occupies residues 71-93; the sequence is YILLNLAVADLFMVIGGFTTTMY. Topologically, residues 94 to 107 are extracellular; that stretch reads TSMHGYFVLGRLGC. Cys107 and Cys184 form a disulfide bridge. A helical transmembrane segment spans residues 108–130; it reads NLEGFFATLGGMISLWSLAVLAI. A 'Ionic lock' involved in activated form stabilization motif is present at residues 131-133; it reads ERW. Over 131 to 149 the chain is Cytoplasmic; it reads ERWVVVCKPISNFRFGENH. Residues 150–170 traverse the membrane as a helical segment; that stretch reads AIMGVSLTWGMALACTVPPLV. Residues 171-199 are Extracellular-facing; sequence GWSRYIPEGMQCSCGIDYYTRAEGFNNET. A glycan (N-linked (GlcNAc...) asparagine) is linked at Asn197. A helical membrane pass occupies residues 200 to 221; it reads FVLYMFCCHFTVPLTIIFFCYG. Over 222-249 the chain is Cytoplasmic; it reads RLLCAVKEAAAAQQESETTQRAEREVTR. Residues 250–271 form a helical membrane-spanning segment; sequence MVVIMVIGFLVCWLPYASVAWF. At 272-283 the chain is on the extracellular side; sequence VFTHQGSEFGPL. Residues 284–305 form a helical membrane-spanning segment; sequence FMTIPAFFAKSSAIYNPMIYIC. Lys293 carries the post-translational modification N6-(retinylidene)lysine. Residues 306–348 are Cytoplasmic-facing; the sequence is MNKQFRHCMITTLFCGKNPFEGEEEGASSTKTEASSASSVSPA. Residue Cys320 is the site of S-palmitoyl cysteine attachment. The interval 327–348 is disordered; sequence GEEEGASSTKTEASSASSVSPA. Over residues 332 to 348 the composition is skewed to low complexity; sequence ASSTKTEASSASSVSPA.

Belongs to the G-protein coupled receptor 1 family. Opsin subfamily. Phosphorylated on some or all of the serine and threonine residues present in the C-terminal region. In terms of processing, contains one covalently linked retinal chromophore.

Its subcellular location is the membrane. The protein localises to the cell projection. The protein resides in the cilium. It localises to the photoreceptor outer segment. Photoreceptor required for image-forming vision at low light intensity. While most salt water fish species use retinal as chromophore, most freshwater fish use 3-dehydroretinal, or a mixture of retinal and 3-dehydroretinal. Light-induced isomerization of 11-cis to all-trans retinal triggers a conformational change that activates signaling via G-proteins. Subsequent receptor phosphorylation mediates displacement of the bound G-protein alpha subunit by arrestin and terminates signaling. The protein is Rhodopsin (rho) of Sargocentron xantherythrum (Hawaiian squirrelfish).